A 407-amino-acid chain; its full sequence is Substance-P receptor (407 aa).

The Extracellular segment spans residues Met1 to Gln31. N-linked (GlcNAc...) asparagine glycosylation is found at Asn14 and Asn18. Residues Ile32 to Ile54 form a helical membrane-spanning segment. The Cytoplasmic portion of the chain corresponds to Trp55–Arg64. A helical membrane pass occupies residues Thr65–Thr86. Residues Val87 to Lys106 lie on the Extracellular side of the membrane. A disulfide bridge connects residues Cys105 and Cys180. A helical membrane pass occupies residues Phe107 to Phe128. Over Asp129–Lys148 the chain is Cytoplasmic. The chain crosses the membrane as a helical span at residues Val149–Ser169. The Extracellular segment spans residues Thr170–Lys194. Residues Ala195–Val219 traverse the membrane as a helical segment. The Cytoplasmic segment spans residues Gly220–Lys248. Residues Met249–Leu270 traverse the membrane as a helical segment. The Extracellular portion of the chain corresponds to Pro271 to Ile283. The chain crosses the membrane as a helical span at residues Gln284–Leu308. Residues Asn309–Ala407 are Cytoplasmic-facing. Cys322 is lipidated: S-palmitoyl cysteine. The tract at residues Val362 to Ala407 is disordered. The span at Thr376–Ala407 shows a compositional bias: polar residues.

The protein belongs to the G-protein coupled receptor 1 family. In terms of assembly, interacts with ARRB1.

Its subcellular location is the cell membrane. This is a receptor for the tachykinin neuropeptide substance P. It is probably associated with G proteins that activate a phosphatidylinositol-calcium second messenger system. The rank order of affinity of this receptor to tachykinins is: substance P &gt; substance K &gt; neuromedin-K. The chain is Substance-P receptor (Tacr1) from Rattus norvegicus (Rat).